The chain runs to 301 residues: Small ribosomal subunit protein uS2 (301 aa).

This sequence belongs to the universal ribosomal protein uS2 family. In terms of assembly, component of the small ribosomal subunit. Mature ribosomes consist of a small (40S) and a large (60S) subunit. The 40S subunit contains about 33 different proteins and 1 molecule of RNA (18S). The 60S subunit contains about 49 different proteins and 3 molecules of RNA (25S, 5.8S and 5S). Interacts with RPS21.

Its subcellular location is the cytoplasm. Required for the assembly and/or stability of the 40S ribosomal subunit. Required for the processing of the 20S rRNA-precursor to mature 18S rRNA in a late step of the maturation of 40S ribosomal subunits. The sequence is that of Small ribosomal subunit protein uS2 from Ajellomyces dermatitidis (strain ER-3 / ATCC MYA-2586) (Blastomyces dermatitidis).